We begin with the raw amino-acid sequence, 1009 residues long: Protein naked cuticle (1009 aa).

Polar residues-rich tracts occupy residues 68-83 (IITT…ASNK) and 121-130 (LPQDMSSSGS). The interval 68-166 (IITTPPGNAS…QQQTAAAATG (99 aa)) is disordered. Positions 152–166 (QQQQQQQQTAAAATG) are enriched in low complexity. The interval 206–282 (EFTCDVSVEG…TVSPEGKSKS (77 aa)) is interaction with dsh. One can recognise an EF-hand domain in the interval 217–253 (KSSQPLQFSFTFYDLDGHHGKITKDDIVGIVYTIYES). Disordered regions lie at residues 328-433 (MSKQ…QQQL), 456-479 (AGNE…RQQD), and 515-580 (GNDS…QQQR). Basic residues predominate over residues 349–359 (RRQHRYRPRKL). Over residues 370–387 (NSEKEKERERERERESHA) the composition is skewed to basic and acidic residues. A compositionally biased stretch (basic residues) spans 403-414 (KSHHHHHHHGRY). Over residues 515–525 (GNDSGNWQNRH) the composition is skewed to polar residues. 2 stretches are compositionally biased toward low complexity: residues 526 to 535 (LQQSLQQQPQ) and 570 to 580 (HQQLQQQQQQR). Residues 584 to 613 (ECWKSALNRNDLISIIRESMEKNRLCFQLN) are required for nuclear localization and inhibition of Wnt signaling. Disordered regions lie at residues 619–662 (NVSP…SPLS), 773–799 (SAAH…HNQK), 835–899 (LQQK…SAGS), and 955–982 (TESG…LDTS). Low complexity-rich tracts occupy residues 624-638 (RQPA…QRQR) and 653-662 (SPAAPQSPLS). Positions 843 to 857 (RRHRHKQQQQQHHHQ) are enriched in basic residues. Residues 858–875 (QQQQQQQQQNQQQQQQQQ) are compositionally biased toward low complexity. Residues 968–979 (EADEGQEQEVEL) show a composition bias toward acidic residues.

It belongs to the NKD family. As to quaternary structure, interacts with dsh.

The protein localises to the cell membrane. Its subcellular location is the cytoplasm. The protein resides in the nucleus. Cell autonomous antagonist of the canonical Wnt signaling pathway. May activate a second Wnt signaling pathway that controls planar cell polarity. Required for neuroblast specification. This is Protein naked cuticle from Drosophila pseudoobscura pseudoobscura (Fruit fly).